A 467-amino-acid chain; its full sequence is MNTLHIFDSVKKEKVEFKPIQEGKVKIYVCGPTVYDDSHLGHARSAIAFDLLHRVLKVNDYEVTMTKNFTDIDDKIIKKMYETNKTLENITNQYINAYKADMKALNILDNTIEPKATENLEVMKEMISNLISKDVAYKTSDSVYFDTSKDNLYGTLSHKSNDENSQARVEENQEKRNSADFALWKFEKANDVSFDAPFGKGRPGWHIECSAMIEKHLAYKDSPYQIDIHAGGADLLFPHHENEAAQTRCSSGQNLAKYWMHNGFVNINGEKMSKSLGNSFFLKDVLKSYSGEVIRFYLMSTHYRADLSFNEEDLIASKKRLDKIYRLKKRVYGIEDSSVNKKFKEDILNALNDDINTSIALSVIDEMINSANDKLDSNPKDKNLKKELISNINFIEEVLGIGGNDAYAYFQFGINESTKEKIESLILKRNEAKKTKDFQTADKLRDELSSMDISLMDTVNGTVWEKL.

C30 provides a ligand contact to Zn(2+). Positions 32-42 match the 'HIGH' region motif; sequence PTVYDDSHLGH. The Zn(2+) site is built by C209, H239, and E243. A 'KMSKS' region motif is present at residues 271–275; it reads KMSKS. K274 contacts ATP.

Belongs to the class-I aminoacyl-tRNA synthetase family. In terms of assembly, monomer. The cofactor is Zn(2+).

Its subcellular location is the cytoplasm. The catalysed reaction is tRNA(Cys) + L-cysteine + ATP = L-cysteinyl-tRNA(Cys) + AMP + diphosphate. The protein is Cysteine--tRNA ligase of Aliarcobacter butzleri (strain RM4018) (Arcobacter butzleri).